Reading from the N-terminus, the 89-residue chain is ATP synthase subunit e, mitochondrial (89 aa).

Residue Ser1 is modified to N-acetylserine. Residues 8-25 (YSSLAAGIVYGAYHTYTL) traverse the membrane as a helical segment.

In terms of assembly, F-type ATP synthases have 2 components, the catalytic core F(1) and the membrane-embedded component F(0), linked together by a central stalk and a peripheral stalk. The central stalk, also called rotor shaft, is often seen as part of F(1). The peripheral stalk is seen as part of F(0). F(0) contains the membrane channel next to the rotor. F-type ATP synthases form dimers but each monomer functions independently in ATP generation. The dimer consists of 18 different polypeptides: ATP1 (subunit alpha, part of F(1), 3 molecules per monomer), ATP2 (subunit beta, part of F(1), 3 molecules per monomer), ATP3 (subunit gamma, part of the central stalk), ATP4 (subunit b, part of the peripheral stalk), ATP5/OSCP (subunit 5/OSCP, part of the peripheral stalk), ATP6 (subunit a, part of the peripheral stalk), ATP7 (subunit d, part of the peripheral stalk), ATP8 (subunit 8, part of the peripheral stalk), OLI1 (subunit c, part of the rotor, 10 molecules per monomer), ATP14 (subunit h, part of the peripheral stalk), ATP15 (subunit epsilon, part of the central stalk), ATP16 (subunit delta, part of the central stalk), ATP17 (subunit f, part of the peripheral stalk), ATP18 (subunit i/j, part of the peripheral stalk). Dimer-specific subunits are ATP19 (subunit k, at interface between monomers), ATP20 (subunit g, at interface between monomers), TIM11 (subunit e, at interface between monomers). Also contains subunit L.

Its subcellular location is the mitochondrion inner membrane. Mitochondrial membrane ATP synthase (F(1)F(0) ATP synthase or Complex V) produces ATP from ADP in the presence of a proton gradient across the membrane which is generated by electron transport complexes of the respiratory chain. F-type ATP synthases consist of two structural domains, F(1) - containing the extramembraneous catalytic core, and F(0) - containing the membrane proton channel, linked together by a central stalk and a peripheral stalk. During catalysis, ATP synthesis in the catalytic domain of F(1) is coupled via a rotary mechanism of the central stalk subunits to proton translocation. Part of the complex F(0) domain. Minor subunit located with subunit a/ATP6 in the membrane. Together with subunit g/ATP20, probably contributes to membrane curvature at the site of the ATP synthase dimer, ultimately contributing to formation of cristae. The polypeptide is ATP synthase subunit e, mitochondrial (Pichia angusta (Yeast)).